A 1135-amino-acid polypeptide reads, in one-letter code: Nonribosomal peptide synthetase 9 (1135 aa).

The condensation 1 stretch occupies residues 23-77; it reads TKQITTATYIKLAWAVVISCNTGSNDTVFGITVNGRGAPIDGAGEMTGATIATIP. The tract at residues 177 to 562 is adenylation; sequence SYAELIRSAN…RRIDEIQEAT (386 aa). The segment at 485 to 507 is disordered; that stretch reads GPSPPVGRSSSNRAGSGRCAMGS. Over residues 491–502 the composition is skewed to low complexity; sequence GRSSSNRAGSGR. In terms of domain architecture, Carrier spans 672–748; that stretch reads APSNRVEQDL…AIANKIGDVQ (77 aa). Ser-709 bears the O-(pantetheine 4'-phosphoryl)serine mark. Positions 746 to 999 are condensation 2; the sequence is DVQRAAIKLV…TTLWPVVAQV (254 aa).

It belongs to the NRP synthetase family.

In terms of biological role, nonribosomal peptide synthesis (NRPS) is a key mechanism responsible for the biosynthesis of bioactive metabolites which are potentially contributing to organismal virulence. The polypeptide is Nonribosomal peptide synthetase 9 (NRPS9) (Aspergillus fumigatus (strain ATCC MYA-4609 / CBS 101355 / FGSC A1100 / Af293) (Neosartorya fumigata)).